A 157-amino-acid chain; its full sequence is Protein MG115 (157 aa).

This sequence belongs to the CinA family.

This is Protein MG115 from Mycoplasma genitalium (strain ATCC 33530 / DSM 19775 / NCTC 10195 / G37) (Mycoplasmoides genitalium).